The sequence spans 490 residues: Katanin p60 ATPase-containing subunit A-like 1 (490 aa).

Met1 carries the N-acetylmethionine modification. The tract at residues 95 to 178 is disordered; sequence DPAVWPPPVP…MQDGASDGDI (84 aa). Residues 116 to 127 are compositionally biased toward basic and acidic residues; the sequence is PNREVRPLRKDV. The span at 128-139 shows a compositional bias: low complexity; that stretch reads AGVGARGPVGRA. The segment covering 143 to 169 has biased composition (basic and acidic residues); the sequence is SKSEKPSTNKDKDYRARGRDDKGRKNM. At Ser174 the chain carries Phosphoserine. Position 248–255 (248–255) interacts with ATP; it reads GPPGTGKT.

The protein belongs to the AAA ATPase family. Katanin p60 subunit A1 subfamily. A-like 1 sub-subfamily. Interacts with KATNB1 and KATNBL1.

Its subcellular location is the cytoplasm. The protein resides in the cytoskeleton. The protein localises to the spindle pole. It is found in the spindle. It carries out the reaction n ATP + n H2O + a microtubule = n ADP + n phosphate + (n+1) alpha/beta tubulin heterodimers.. Its function is as follows. Regulates microtubule dynamics in Sertoli cells, a process that is essential for spermiogenesis and male fertility. Severs microtubules in an ATP-dependent manner, promoting rapid reorganization of cellular microtubule arrays. Has microtubule-severing activity in vitro. The chain is Katanin p60 ATPase-containing subunit A-like 1 from Sorex araneus (Eurasian common shrew).